Here is a 397-residue protein sequence, read N- to C-terminus: Imidazolonepropionase (397 aa).

His-66 and His-68 together coordinate Fe(3+). Residues His-66 and His-68 each coordinate Zn(2+). Residues Arg-75, Tyr-138, and His-171 each coordinate 4-imidazolone-5-propanoate. Tyr-138 contributes to the N-formimidoyl-L-glutamate binding site. Residue His-236 participates in Fe(3+) binding. Zn(2+) is bound at residue His-236. Position 239 (Gln-239) interacts with 4-imidazolone-5-propanoate. Residue Asp-311 coordinates Fe(3+). Asp-311 provides a ligand contact to Zn(2+). N-formimidoyl-L-glutamate is bound by residues Asn-313 and Gly-315. Ser-316 is a binding site for 4-imidazolone-5-propanoate.

The protein belongs to the metallo-dependent hydrolases superfamily. HutI family. Zn(2+) serves as cofactor. Fe(3+) is required as a cofactor.

The protein localises to the cytoplasm. The enzyme catalyses 4-imidazolone-5-propanoate + H2O = N-formimidoyl-L-glutamate. The protein operates within amino-acid degradation; L-histidine degradation into L-glutamate; N-formimidoyl-L-glutamate from L-histidine: step 3/3. In terms of biological role, catalyzes the hydrolytic cleavage of the carbon-nitrogen bond in imidazolone-5-propanoate to yield N-formimidoyl-L-glutamate. It is the third step in the universal histidine degradation pathway. The sequence is that of Imidazolonepropionase from Roseobacter denitrificans (strain ATCC 33942 / OCh 114) (Erythrobacter sp. (strain OCh 114)).